The primary structure comprises 242 residues: Phosphomannomutase 2 (242 aa).

Aspartate 8 functions as the Nucleophile in the catalytic mechanism. Mg(2+)-binding residues include aspartate 8 and aspartate 10. Aspartate 10 (proton donor/acceptor) is an active-site residue. The alpha-D-mannose 1-phosphate site is built by arginine 17, arginine 119, arginine 130, and arginine 137. N6-acetyllysine is present on lysine 145. Residues serine 175 and aspartate 177 each coordinate alpha-D-mannose 1-phosphate. The Mg(2+) site is built by aspartate 205, phenylalanine 217, aspartate 219, and threonine 222.

The protein belongs to the eukaryotic PMM family. Homodimer.

Its subcellular location is the cytoplasm. The catalysed reaction is alpha-D-mannose 1-phosphate = D-mannose 6-phosphate. The protein operates within nucleotide-sugar biosynthesis; GDP-alpha-D-mannose biosynthesis; alpha-D-mannose 1-phosphate from D-fructose 6-phosphate: step 2/2. Involved in the synthesis of the GDP-mannose and dolichol-phosphate-mannose required for a number of critical mannosyl transfer reactions. This Mus musculus (Mouse) protein is Phosphomannomutase 2 (Pmm2).